A 697-amino-acid chain; its full sequence is Potassium-transporting ATPase ATP-binding subunit (697 aa).

The next 4 membrane-spanning stretches (helical) occupy residues 55-75 (PIMFVVEIGFIITFILSFLPS), 79-99 (SIPGWFNITVSLILLFTVLFA), 245-265 (LTLIFLIVVVTLPIFTNYLGF), and 271-291 (VLVALLVCLIPTTIGGLLSAI). Residue Asp-324 is the 4-aspartylphosphate intermediate of the active site. ATP-binding positions include Asp-361, Glu-365, 393-400 (FKAETRMS), and Lys-412. Mg(2+) contacts are provided by Asp-535 and Asp-539. 3 consecutive transmembrane segments (helical) span residues 605-625 (FAIIPAMFTLAIPQMEALNIM), 633-653 (AILSALIFNAVIIPLLIPLAM), and 677-697 (GGVIVPFIGIKVIDMIVGLFI).

This sequence belongs to the cation transport ATPase (P-type) (TC 3.A.3) family. Type IA subfamily. As to quaternary structure, the system is composed of three essential subunits: KdpA, KdpB and KdpC.

The protein resides in the cell membrane. It catalyses the reaction K(+)(out) + ATP + H2O = K(+)(in) + ADP + phosphate + H(+). Its function is as follows. Part of the high-affinity ATP-driven potassium transport (or Kdp) system, which catalyzes the hydrolysis of ATP coupled with the electrogenic transport of potassium into the cytoplasm. This subunit is responsible for energy coupling to the transport system and for the release of the potassium ions to the cytoplasm. In Bacillus cereus (strain B4264), this protein is Potassium-transporting ATPase ATP-binding subunit.